A 310-amino-acid chain; its full sequence is Thioredoxin reductase (310 aa).

Residue 34–41 coordinates FAD; sequence NGMQPGGQ. Cys135 and Cys138 are joined by a disulfide. 281–290 contributes to the FAD binding site; that stretch reads DVQDKIYRQA.

It belongs to the class-II pyridine nucleotide-disulfide oxidoreductase family. In terms of assembly, homodimer. FAD serves as cofactor.

The protein resides in the cytoplasm. The enzyme catalyses [thioredoxin]-dithiol + NADP(+) = [thioredoxin]-disulfide + NADPH + H(+). This Rickettsia conorii (strain ATCC VR-613 / Malish 7) protein is Thioredoxin reductase (trxB).